The sequence spans 145 residues: 3-hydroxyacyl-[acyl-carrier-protein] dehydratase FabZ (145 aa).

Residue histidine 49 is part of the active site.

Belongs to the thioester dehydratase family. FabZ subfamily.

The protein resides in the cytoplasm. It catalyses the reaction a (3R)-hydroxyacyl-[ACP] = a (2E)-enoyl-[ACP] + H2O. In terms of biological role, involved in unsaturated fatty acids biosynthesis. Catalyzes the dehydration of short chain beta-hydroxyacyl-ACPs and long chain saturated and unsaturated beta-hydroxyacyl-ACPs. The protein is 3-hydroxyacyl-[acyl-carrier-protein] dehydratase FabZ of Rickettsia massiliae (strain Mtu5).